Consider the following 607-residue polypeptide: All-trans-retinol 13,14-reductase (607 aa).

Positions 1 to 22 (MWFAVVAIFLALVAFLYRYVVG) are cleaved as a signal peptide.

It belongs to the carotenoid/retinoid oxidoreductase family. CrtISO subfamily. NAD(+) serves as cofactor. It depends on NADP(+) as a cofactor. FAD is required as a cofactor.

It localises to the endoplasmic reticulum membrane. The catalysed reaction is all-trans-13,14-dihydroretinol + A = all-trans-retinol + AH2. Catalyzes the saturation of all-trans-retinol to all-trans-13,14-dihydroretinol. In addition, saturates the 7-8 double bond of all-trans-retinol to produce all-trans-7,8-dihydroretinol. Can also use vitamin A2 (all-trans-3,4-didehydroretinol) as a substrate, to produce all-trans-13,14-dihydro-3,4-didehydroretinol or all-trans-7,8-dihydro-3,4-didehydroretinol. May play a role in vitamin A metabolism. This Danio rerio (Zebrafish) protein is All-trans-retinol 13,14-reductase.